A 329-amino-acid polypeptide reads, in one-letter code: L-lactate dehydrogenase (329 aa).

NAD(+) is bound by residues Val18, Glu39, Lys46, Tyr71, and 85–86 (GA). Positions 88 and 94 each coordinate substrate. Residues Ser107, 124-126 (AAN), and Ser149 contribute to the NAD(+) site. Residue 126-129 (NPVD) participates in substrate binding. Residue 154 to 157 (DSAR) participates in substrate binding. Residues Arg159 and His174 each coordinate beta-D-fructose 1,6-bisphosphate. Catalysis depends on His181, which acts as the Proton acceptor. Phosphotyrosine is present on Tyr226. A substrate-binding site is contributed by Thr235.

It belongs to the LDH/MDH superfamily. LDH family. In terms of assembly, homotetramer.

Its subcellular location is the cytoplasm. The enzyme catalyses (S)-lactate + NAD(+) = pyruvate + NADH + H(+). It participates in fermentation; pyruvate fermentation to lactate; (S)-lactate from pyruvate: step 1/1. With respect to regulation, allosterically activated by fructose 1,6-bisphosphate (FBP). Its function is as follows. Catalyzes the conversion of lactate to pyruvate. This Streptococcus agalactiae serotype V (strain ATCC BAA-611 / 2603 V/R) protein is L-lactate dehydrogenase.